A 482-amino-acid chain; its full sequence is tRNA sulfurtransferase (482 aa).

The THUMP domain occupies Q61–H165. ATP contacts are provided by residues L183–I184, K265, G287, and Q296. A disulfide bond links C344 and C456. In terms of domain architecture, Rhodanese spans I404 to P482. C456 (cysteine persulfide intermediate) is an active-site residue.

It belongs to the ThiI family.

It localises to the cytoplasm. The enzyme catalyses [ThiI sulfur-carrier protein]-S-sulfanyl-L-cysteine + a uridine in tRNA + 2 reduced [2Fe-2S]-[ferredoxin] + ATP + H(+) = [ThiI sulfur-carrier protein]-L-cysteine + a 4-thiouridine in tRNA + 2 oxidized [2Fe-2S]-[ferredoxin] + AMP + diphosphate. It carries out the reaction [ThiS sulfur-carrier protein]-C-terminal Gly-Gly-AMP + S-sulfanyl-L-cysteinyl-[cysteine desulfurase] + AH2 = [ThiS sulfur-carrier protein]-C-terminal-Gly-aminoethanethioate + L-cysteinyl-[cysteine desulfurase] + A + AMP + 2 H(+). It functions in the pathway cofactor biosynthesis; thiamine diphosphate biosynthesis. In terms of biological role, catalyzes the ATP-dependent transfer of a sulfur to tRNA to produce 4-thiouridine in position 8 of tRNAs, which functions as a near-UV photosensor. Also catalyzes the transfer of sulfur to the sulfur carrier protein ThiS, forming ThiS-thiocarboxylate. This is a step in the synthesis of thiazole, in the thiamine biosynthesis pathway. The sulfur is donated as persulfide by IscS. The polypeptide is tRNA sulfurtransferase (Vibrio vulnificus (strain YJ016)).